Consider the following 514-residue polypeptide: tRNA-2-methylthio-N(6)-dimethylallyladenosine synthase (514 aa).

Positions 1–21 (MNEEQRKASSVDVLAERDKKA) are disordered. The MTTase N-terminal domain occupies 68 to 186 (RTFLIKTYGC…LPEILEEAYL (119 aa)). [4Fe-4S] cluster contacts are provided by C77, C113, C147, C223, C227, and C230. A Radical SAM core domain is found at 209–440 (REGNIKAWVN…KKVGHYSQIA (232 aa)). The TRAM domain occupies 442-505 (SKYEGQTVTV…QYSLNGSFVK (64 aa)).

This sequence belongs to the methylthiotransferase family. MiaB subfamily. Monomer. Requires [4Fe-4S] cluster as cofactor.

It is found in the cytoplasm. It carries out the reaction N(6)-dimethylallyladenosine(37) in tRNA + (sulfur carrier)-SH + AH2 + 2 S-adenosyl-L-methionine = 2-methylsulfanyl-N(6)-dimethylallyladenosine(37) in tRNA + (sulfur carrier)-H + 5'-deoxyadenosine + L-methionine + A + S-adenosyl-L-homocysteine + 2 H(+). Functionally, catalyzes the methylthiolation of N6-(dimethylallyl)adenosine (i(6)A), leading to the formation of 2-methylthio-N6-(dimethylallyl)adenosine (ms(2)i(6)A) at position 37 in tRNAs that read codons beginning with uridine. The sequence is that of tRNA-2-methylthio-N(6)-dimethylallyladenosine synthase from Staphylococcus aureus (strain MRSA252).